Here is a 252-residue protein sequence, read N- to C-terminus: Ribosomal RNA small subunit methyltransferase J (252 aa).

S-adenosyl-L-methionine contacts are provided by residues 101–102, 117–118, 153–154, and D171; these read RD, ER, and SS.

The protein belongs to the methyltransferase superfamily. RsmJ family.

It localises to the cytoplasm. The enzyme catalyses guanosine(1516) in 16S rRNA + S-adenosyl-L-methionine = N(2)-methylguanosine(1516) in 16S rRNA + S-adenosyl-L-homocysteine + H(+). Functionally, specifically methylates the guanosine in position 1516 of 16S rRNA. This is Ribosomal RNA small subunit methyltransferase J from Salmonella choleraesuis (strain SC-B67).